Reading from the N-terminus, the 420-residue chain is uncharacterized protein (420 aa).

Disordered regions lie at residues 84–103 (RSQANSESTPPEHTWSGTSE) and 122–211 (SMNN…NKKS). The segment covering 85 to 103 (SQANSESTPPEHTWSGTSE) has biased composition (polar residues). Positions 184-199 (SMTDQEVEQRRKEANK) are enriched in basic and acidic residues. 2 coiled-coil regions span residues 265–310 (TEKE…TATN) and 345–374 (LQFKIKKFERREKLLEEVENQIKQYFNFKE). Residues 399-408 (KTSSPKTSIA) show a composition bias toward polar residues. Residues 399–420 (KTSSPKTSIAGSHRRSTRSSEN) form a disordered region. Residues 410-420 (SHRRSTRSSEN) show a composition bias toward basic residues.

This is an uncharacterized protein from Caenorhabditis elegans.